The primary structure comprises 231 residues: NADH-ubiquinone oxidoreductase chain 4 (231 aa).

7 helical membrane-spanning segments follow: residues 1-21 (PIAGSMVLAAILLKLGGYGII), 34-54 (LFIPFIVLALWGATLANLTCL), 61-80 (SLIAYSSISHMGLVVAAVII), 84-106 (WGLSGAMALMIAHGFTSSALFCL), 118-138 (ILILTRGFHNILPMATTWWLL), 156-176 (LLIVSTLFNWCPTTIIMLGLS), and 211-231 (LLMILHIIPLLMISMKPELVI).

This sequence belongs to the complex I subunit 4 family.

Its subcellular location is the mitochondrion membrane. The enzyme catalyses a ubiquinone + NADH + 5 H(+)(in) = a ubiquinol + NAD(+) + 4 H(+)(out). In terms of biological role, core subunit of the mitochondrial membrane respiratory chain NADH dehydrogenase (Complex I) that is believed to belong to the minimal assembly required for catalysis. Complex I functions in the transfer of electrons from NADH to the respiratory chain. The immediate electron acceptor for the enzyme is believed to be ubiquinone. In Hypnale hypnale (Merrem's hump-nosed viper), this protein is NADH-ubiquinone oxidoreductase chain 4 (MT-ND4).